We begin with the raw amino-acid sequence, 136 residues long: Holo-[acyl-carrier-protein] synthase (136 aa).

Aspartate 8 and glutamate 57 together coordinate Mg(2+).

The protein belongs to the P-Pant transferase superfamily. AcpS family. Mg(2+) serves as cofactor.

It localises to the cytoplasm. The catalysed reaction is apo-[ACP] + CoA = holo-[ACP] + adenosine 3',5'-bisphosphate + H(+). In terms of biological role, transfers the 4'-phosphopantetheine moiety from coenzyme A to a Ser of acyl-carrier-protein. The polypeptide is Holo-[acyl-carrier-protein] synthase (Methylorubrum extorquens (strain CM4 / NCIMB 13688) (Methylobacterium extorquens)).